The primary structure comprises 275 residues: Adenylate kinase (275 aa).

54-59 is an ATP binding site; sequence GAGKGT. An NMP region spans residues 74–103; the sequence is ATGDMLRSQVAKKTPLGREAKKIMDQGGLV. Residues threonine 75, arginine 80, 101 to 103, 130 to 133, and glutamine 137 each bind AMP; these read GLV and GFPR. Positions 171-208 are LID; sequence GRLVHPASGRSYHRVFNPPKADMKDDITGEPLVSRSDD. Residues arginine 172 and 181–182 contribute to the ATP site; that span reads SY. Residues arginine 205 and arginine 216 each contribute to the AMP site. An ATP-binding site is contributed by glutamine 244.

It belongs to the adenylate kinase family. AK2 subfamily. Monomer.

It is found in the cytoplasm. It localises to the cytosol. The protein localises to the mitochondrion intermembrane space. It catalyses the reaction AMP + ATP = 2 ADP. Its function is as follows. Catalyzes the reversible transfer of the terminal phosphate group between ATP and AMP. Plays an important role in cellular energy homeostasis and in adenine nucleotide metabolism. Adenylate kinase activity is critical for regulation of the phosphate utilization and the AMP de novo biosynthesis pathways. In Botryotinia fuckeliana (strain B05.10) (Noble rot fungus), this protein is Adenylate kinase (adk1).